Reading from the N-terminus, the 349-residue chain is Phosphate acyltransferase (349 aa).

Belongs to the PlsX family. Homodimer. Probably interacts with PlsY.

Its subcellular location is the cytoplasm. It carries out the reaction a fatty acyl-[ACP] + phosphate = an acyl phosphate + holo-[ACP]. It participates in lipid metabolism; phospholipid metabolism. Catalyzes the reversible formation of acyl-phosphate (acyl-PO(4)) from acyl-[acyl-carrier-protein] (acyl-ACP). This enzyme utilizes acyl-ACP as fatty acyl donor, but not acyl-CoA. The sequence is that of Phosphate acyltransferase from Akkermansia muciniphila (strain ATCC BAA-835 / DSM 22959 / JCM 33894 / BCRC 81048 / CCUG 64013 / CIP 107961 / Muc).